The following is a 325-amino-acid chain: Probable serine/threonine-protein phosphatase 2A activator 1 (325 aa).

This sequence belongs to the PTPA-type PPIase family.

It is found in the cytoplasm. The enzyme catalyses [protein]-peptidylproline (omega=180) = [protein]-peptidylproline (omega=0). Functionally, PPIases accelerate the folding of proteins. It catalyzes the cis-trans isomerization of proline imidic peptide bonds in oligopeptides. Acts as a regulatory subunit for PP2A-like phosphatases modulating their activity or substrate specificity, probably by inducing a conformational change in the catalytic subunit, a direct target of the PPIase. This is Probable serine/threonine-protein phosphatase 2A activator 1 (ppp2r4A) from Dictyostelium discoideum (Social amoeba).